We begin with the raw amino-acid sequence, 541 residues long: CRISPR-associated exonuclease Cas4/endonuclease Cas1 fusion (541 aa).

The tract at residues 1 to 179 (MGIHSLLYCE…NCSLAPVCLP (179 aa)) is CRISPR-associated exonuclease Cas4. Cys-9 provides a ligand contact to [4Fe-4S] cluster. Mn(2+)-binding residues include Asp-65 and Glu-78. Cys-168, Cys-171, and Cys-177 together coordinate [4Fe-4S] cluster. The interval 204 to 541 (TLHVFGHDSR…ANIFAQARLR (338 aa)) is CRISPR-associated endonuclease Cas1. Residues Glu-365, His-433, and Glu-448 each contribute to the Mn(2+) site.

This sequence in the N-terminal section; belongs to the CRISPR-associated exonuclease Cas4 family. The protein in the C-terminal section; belongs to the CRISPR-associated endonuclease Cas1 family. Homodimer, forms a heterotetramer with a Cas2 homodimer. It depends on [4Fe-4S] cluster as a cofactor. The cofactor is Mg(2+). Mn(2+) is required as a cofactor.

It catalyses the reaction exonucleolytic cleavage in the 5'- to 3'-direction to yield nucleoside 3'-phosphates.. In terms of biological role, CRISPR (clustered regularly interspaced short palindromic repeat), is an adaptive immune system that provides protection against mobile genetic elements (viruses, transposable elements and conjugative plasmids). CRISPR clusters contain spacers, sequences complementary to antecedent mobile elements, and target invading nucleic acids. CRISPR clusters are transcribed and processed into CRISPR RNA (crRNA). The Cas4 region acts as a ssDNA exonuclease, while the Cas1 region acts as a dsDNA endonuclease. Involved in the integration of spacer DNA into the CRISPR cassette. This Leptospira interrogans serogroup Icterohaemorrhagiae serovar Lai (strain 56601) protein is CRISPR-associated exonuclease Cas4/endonuclease Cas1 fusion (cas4-cas1).